A 387-amino-acid polypeptide reads, in one-letter code: (S)-8-oxocitronellyl enol synthase (387 aa).

Residues 36–38, 64–65, 82–83, 106–107, and Gln140 each bind NADP(+); these read TGI, RR, DI, and SW. Active-site residues include Lys144 and Tyr177. 2 residues coordinate substrate: Lys144 and Tyr177. Residues Tyr177 and 211–213 contribute to the NADP(+) site; that span reads SMM.

It belongs to the short-chain dehydrogenases/reductases (SDR) family. Highly divergent. In terms of tissue distribution, expressed in leaves.

It catalyses the reaction (S)-8-oxocitronellyl enol + NADP(+) = (6E)-8-oxogeranial + NADPH + H(+). The catalysed reaction is (S)-8-oxocitronellyl enol + NAD(+) = (6E)-8-oxogeranial + NADH + H(+). The enzyme catalyses (R)-8-oxocitronellyl enol + NADP(+) = (6E)-8-oxogeranial + NADPH + H(+). Functionally, iridoid synthase that catalyzes the first step in generation of the iridoid ring scaffold using the linear monoterpene (6E)-8-oxogeranial as substrate. Reduces 8-oxogeranial, generating an unstable product that is subsequently cyclized into several possible products, either non-enzymically or by dedicated cyclases. Iridoids comprise a large family of distinctive bicyclic monoterpenes that possess a wide range of pharmacological activities, including anticancer, anti-inflammatory, antifungal and antibacterial activities. The chain is (S)-8-oxocitronellyl enol synthase from Antirrhinum majus (Garden snapdragon).